The primary structure comprises 281 residues: Bis(5'-nucleosyl)-tetraphosphatase, symmetrical (281 aa).

This sequence belongs to the Ap4A hydrolase family.

It carries out the reaction P(1),P(4)-bis(5'-adenosyl) tetraphosphate + H2O = 2 ADP + 2 H(+). Hydrolyzes diadenosine 5',5'''-P1,P4-tetraphosphate to yield ADP. In Delftia acidovorans (strain DSM 14801 / SPH-1), this protein is Bis(5'-nucleosyl)-tetraphosphatase, symmetrical.